The following is a 280-amino-acid chain: MKRIYVISDATGETAERVIRAALSQFYYDEVRVVRLCQIHNENDVQQAMSVAIAEPGMIAYTLVDPSLSQKVAQLAEDHGMYAVDLLGGLIYSLSCFLGATSQAKPGLLHRIDTDYFKRMEAVNFTVTHDDGQDTQYLHKADLVLVGASRSSKTPLSMYLAHKGYKVANVPLIIGIDPPVELFQIEQEKVVGLVIDPKRLVEIRTSRLINMRQSPRGNYADYQRVEDEITSCRRLYRQHPQWMVIDMTNKSVEEAASEILRKMAVREKRITEARVKGDIS.

147–154 (GASRSSKT) lines the ADP pocket.

This sequence belongs to the pyruvate, phosphate/water dikinase regulatory protein family. PDRP subfamily.

The catalysed reaction is N(tele)-phospho-L-histidyl/L-threonyl-[pyruvate, phosphate dikinase] + ADP = N(tele)-phospho-L-histidyl/O-phospho-L-threonyl-[pyruvate, phosphate dikinase] + AMP + H(+). The enzyme catalyses N(tele)-phospho-L-histidyl/O-phospho-L-threonyl-[pyruvate, phosphate dikinase] + phosphate + H(+) = N(tele)-phospho-L-histidyl/L-threonyl-[pyruvate, phosphate dikinase] + diphosphate. Functionally, bifunctional serine/threonine kinase and phosphorylase involved in the regulation of the pyruvate, phosphate dikinase (PPDK) by catalyzing its phosphorylation/dephosphorylation. In Pelobacter propionicus (strain DSM 2379 / NBRC 103807 / OttBd1), this protein is Putative pyruvate, phosphate dikinase regulatory protein.